Consider the following 125-residue polypeptide: Large ribosomal subunit protein bL12 (125 aa).

The protein belongs to the bacterial ribosomal protein bL12 family. Homodimer. Part of the ribosomal stalk of the 50S ribosomal subunit. Forms a multimeric L10(L12)X complex, where L10 forms an elongated spine to which 2 to 4 L12 dimers bind in a sequential fashion. Binds GTP-bound translation factors.

Forms part of the ribosomal stalk which helps the ribosome interact with GTP-bound translation factors. Is thus essential for accurate translation. This is Large ribosomal subunit protein bL12 from Francisella tularensis subsp. holarctica (strain FTNF002-00 / FTA).